Consider the following 69-residue polypeptide: Toxin Lc b (69 aa).

Disulfide bonds link C3–C20, C13–C41, C45–C56, and C57–C62.

Belongs to the three-finger toxin family. Long-chain subfamily. Type II alpha-neurotoxin sub-subfamily. In terms of tissue distribution, expressed by the venom gland.

It localises to the secreted. Binds with high affinity to muscular nicotinic acetylcholine receptors (nAChRs), whereas it binds with a low affinity to neuronal alpha-7/CHRNA7 nAChRs. This chain is Toxin Lc b, found in Laticauda colubrina (Yellow-lipped sea krait).